A 331-amino-acid chain; its full sequence is Biotin synthase (331 aa).

A Radical SAM core domain is found at 51–278 (QTIQLSTLMS…KSYVRLSAGR (228 aa)). Residues Cys66, Cys70, and Cys73 each coordinate [4Fe-4S] cluster. 4 residues coordinate [2Fe-2S] cluster: Cys110, Cys141, Cys201, and Arg273.

The protein belongs to the radical SAM superfamily. Biotin synthase family. In terms of assembly, homodimer. [4Fe-4S] cluster serves as cofactor. [2Fe-2S] cluster is required as a cofactor.

The enzyme catalyses (4R,5S)-dethiobiotin + (sulfur carrier)-SH + 2 reduced [2Fe-2S]-[ferredoxin] + 2 S-adenosyl-L-methionine = (sulfur carrier)-H + biotin + 2 5'-deoxyadenosine + 2 L-methionine + 2 oxidized [2Fe-2S]-[ferredoxin]. The protein operates within cofactor biosynthesis; biotin biosynthesis; biotin from 7,8-diaminononanoate: step 2/2. Its function is as follows. Catalyzes the conversion of dethiobiotin (DTB) to biotin by the insertion of a sulfur atom into dethiobiotin via a radical-based mechanism. In Histophilus somni (strain 129Pt) (Haemophilus somnus), this protein is Biotin synthase.